The sequence spans 292 residues: Protein rogdi homolog (292 aa).

Residues 1–12 (MEVQSLTITTNY) show a composition bias toward polar residues. Residues 1-25 (MEVQSLTITTNYPPKPASPNPQDIR) form a disordered region.

The protein belongs to the rogdi family.

The protein localises to the nucleus envelope. The sequence is that of Protein rogdi homolog from Caenorhabditis elegans.